Reading from the N-terminus, the 95-residue chain is MQALIEISDKQYLVKAGDKIFVPKQKAAAGDVIEVKTLMQVNQADSALKAGTATIKVLEHVRDETIIVFRKKRRKRFQKRNGHRQHMTQVEVLSL.

It belongs to the bacterial ribosomal protein bL21 family. In terms of assembly, part of the 50S ribosomal subunit. Contacts protein L20.

Functionally, this protein binds to 23S rRNA in the presence of protein L20. This chain is Large ribosomal subunit protein bL21, found in Chlorobaculum tepidum (strain ATCC 49652 / DSM 12025 / NBRC 103806 / TLS) (Chlorobium tepidum).